The following is a 108-amino-acid chain: ATPase inhibitor, mitochondrial (108 aa).

A mitochondrion-targeting transit peptide spans 1–25 (MAATALAVRSRIGAWSVWAMQSRGF). Residues 25–48 (FSSDTPEGVRSGAGAVRDAGGAFG) are disordered. The segment at 26–52 (SSDTPEGVRSGAGAVRDAGGAFGKKEQ) is N-terminal inhibitory region. Residues 69–108 (ALKKHHENEISHHVKEIERLQKEIERHKQSIKKLKNDDDD) are a coiled coil. The tract at residues 74–106 (HENEISHHVKEIERLQKEIERHKQSIKKLKNDD) is antiparallel alpha-helical coiled coil region. K103 carries the post-translational modification N6-succinyllysine.

It belongs to the ATPase inhibitor family. Homodimer; represents the active form and is present at a pH value below 6.5. Homotetramer; represents the inactive form and is present at a pH value above 7.0.

Its subcellular location is the mitochondrion. In terms of biological role, endogenous F(1)F(o)-ATPase inhibitor limiting ATP depletion when the mitochondrial membrane potential falls below a threshold and the F(1)F(o)-ATP synthase starts hydrolyzing ATP to pump protons out of the mitochondrial matrix. Required to avoid the consumption of cellular ATP when the F(1)F(o)-ATP synthase enzyme acts as an ATP hydrolase. Indirectly acts as a regulator of heme synthesis in erythroid tissues: regulates heme synthesis by modulating the mitochondrial pH and redox potential, allowing FECH to efficiently catalyze the incorporation of iron into protoporphyrin IX to produce heme. The sequence is that of ATPase inhibitor, mitochondrial from Sus scrofa (Pig).